Reading from the N-terminus, the 1372-residue chain is DNA-directed RNA polymerase subunit beta (1372 aa).

The protein belongs to the RNA polymerase beta chain family. As to quaternary structure, the RNAP catalytic core consists of 2 alpha, 1 beta, 1 beta' and 1 omega subunit. When a sigma factor is associated with the core the holoenzyme is formed, which can initiate transcription.

It catalyses the reaction RNA(n) + a ribonucleoside 5'-triphosphate = RNA(n+1) + diphosphate. Functionally, DNA-dependent RNA polymerase catalyzes the transcription of DNA into RNA using the four ribonucleoside triphosphates as substrates. This chain is DNA-directed RNA polymerase subunit beta, found in Psychrobacter cryohalolentis (strain ATCC BAA-1226 / DSM 17306 / VKM B-2378 / K5).